Consider the following 1606-residue polypeptide: Thrombospondin type-1 domain-containing protein 7B (1606 aa).

The N-terminal stretch at 1–31 (MFPKSNLTVTCWVWRSMRKLFLLLSLLLSHA) is a signal peptide. Residues 32 to 1555 (AHLEGKKDNQ…QPLDPDGRVK (1524 aa)) are Extracellular-facing. 18 consecutive TSP type-1 domains span residues 40–98 (NQFI…RVCD), 102–177 (DLFQ…IPCP), 179–233 (DCVV…ISCP), 336–392 (DCET…IVEG), 399–482 (PRYS…IPCS), 484–543 (DCIV…PMCY), 601–661 (DCVL…HSCM), 662–735 (QLHW…LPCK), 737–796 (DCIV…SLCP), 797–869 (VYRW…VPCR), 871–924 (DCTF…CPCD), 925–998 (EFIS…IPCP), 1000–1125 (DCKL…LMCP), 1127–1181 (ECVM…ENCF), 1182–1245 (QFQY…VECV), 1247–1302 (NCQL…TPCY), 1303–1368 (SWVL…VPCP), and 1370–1431 (DCHL…GKCY). Asn150, Asn190, and Asn219 each carry an N-linked (GlcNAc...) asparagine glycan. 3 disulfide bridges follow: Cys411–Cys477, Cys431–Cys481, and Cys442–Cys466. Disulfide bonds link Cys602-Cys643, Cys613-Cys617, and Cys655-Cys660. The N-linked (GlcNAc...) asparagine glycan is linked to Asn683. Disulfide bonds link Cys738/Cys779, Cys749/Cys753, and Cys789/Cys795. The N-linked (GlcNAc...) asparagine glycan is linked to Asn757. A glycan (N-linked (GlcNAc...) asparagine) is linked at Asn842. 3 cysteine pairs are disulfide-bonded: Cys872-Cys907, Cys883-Cys887, and Cys921-Cys923. Asn933 carries N-linked (GlcNAc...) asparagine glycosylation. Disulfide bonds link Cys937–Cys993, Cys959–Cys997, Cys970–Cys983, Cys1001–Cys1038, Cys1012–Cys1016, and Cys1120–Cys1124. The N-linked (GlcNAc...) asparagine glycan is linked to Asn1186. Cystine bridges form between Cys1248–Cys1286, Cys1259–Cys1263, and Cys1296–Cys1301. N-linked (GlcNAc...) asparagine glycosylation is present at Asn1308. 3 disulfides stabilise this stretch: Cys1371–Cys1415, Cys1382–Cys1386, and Cys1425–Cys1430. Asn1456 and Asn1524 each carry an N-linked (GlcNAc...) asparagine glycan. A helical transmembrane segment spans residues 1556 to 1576 (IWVYGVSGGAFLIMIFLIFTS). The Cytoplasmic portion of the chain corresponds to 1577-1606 (YLVCKKPKPHQSTPPQQKPLTLAYDGDLDM). Residues 1583–1606 (PKPHQSTPPQQKPLTLAYDGDLDM) are disordered. Over residues 1586–1595 (HQSTPPQQKP) the composition is skewed to polar residues.

It localises to the membrane. The chain is Thrombospondin type-1 domain-containing protein 7B from Homo sapiens (Human).